The following is a 297-amino-acid chain: MSWIERILGRTSSSSSSSKSKVPEGVWTKCTSCEQVLYSEELKRNMHVCPKCNHHMRFDARTRLLSLLDQDSAQEIAAELEPQDVLKFKDLKKYKDRLTAAQKQTGEKDSFITMYGTLHNMPVVVASFNFEFMGGSMGSVVGAKFVRAAERALADNIPFICFSASGGARMQEALFSLMQMAKTSAILAKMREKGIPFISILTDPTLGGVSASLAMLGDINIAEPKALIGFAGPRVIEQTVREKLPEGFQRAEFLLEHGAIDMIVQRKDMRDTLARLCAKMTNKPTPFKTAELIVEEA.

The interval 1–23 is disordered; sequence MSWIERILGRTSSSSSSSKSKVP. In terms of domain architecture, CoA carboxyltransferase N-terminal spans 26 to 295; it reads VWTKCTSCEQ…PFKTAELIVE (270 aa). Zn(2+) contacts are provided by Cys30, Cys33, Cys49, and Cys52. The C4-type zinc-finger motif lies at 30–52; it reads CTSCEQVLYSEELKRNMHVCPKC.

The protein belongs to the AccD/PCCB family. Acetyl-CoA carboxylase is a heterohexamer composed of biotin carboxyl carrier protein (AccB), biotin carboxylase (AccC) and two subunits each of ACCase subunit alpha (AccA) and ACCase subunit beta (AccD). The cofactor is Zn(2+).

The protein localises to the cytoplasm. The enzyme catalyses N(6)-carboxybiotinyl-L-lysyl-[protein] + acetyl-CoA = N(6)-biotinyl-L-lysyl-[protein] + malonyl-CoA. The protein operates within lipid metabolism; malonyl-CoA biosynthesis; malonyl-CoA from acetyl-CoA: step 1/1. In terms of biological role, component of the acetyl coenzyme A carboxylase (ACC) complex. Biotin carboxylase (BC) catalyzes the carboxylation of biotin on its carrier protein (BCCP) and then the CO(2) group is transferred by the transcarboxylase to acetyl-CoA to form malonyl-CoA. This chain is Acetyl-coenzyme A carboxylase carboxyl transferase subunit beta, found in Actinobacillus pleuropneumoniae serotype 5b (strain L20).